The following is a 356-amino-acid chain: Sensor protein BasS (356 aa).

Residues 1–13 (MRFQRRAMTLRQR) lie on the Cytoplasmic side of the membrane. The helical transmembrane segment at 14-34 (LMLTIGLILLVFQLISTFWLW) threads the bilayer. Over 35 to 64 (HESTEQIQLFEQALRDNRNNDRHIMHEIRE) the chain is Periplasmic. A helical membrane pass occupies residues 65 to 88 (AVASLIVPGVFMVSLTLLICYQAV). In terms of domain architecture, HAMP spans 89-141 (RRITRPLAELQKELEARTADNLAPIAIHSSTLEIESVVSAINQLVTRLTTTLD). Over 89-356 (RRITRPLAEL…TRAWVLLKKA (268 aa)) the chain is Cytoplasmic. The Histidine kinase domain maps to 149-356 (DVAHELRTPL…TRAWVLLKKA (208 aa)). His-152 is subject to Phosphohistidine; by autocatalysis.

In terms of processing, autophosphorylated.

Its subcellular location is the cell inner membrane. It catalyses the reaction ATP + protein L-histidine = ADP + protein N-phospho-L-histidine.. Its function is as follows. Member of the two-component regulatory system BasS/BasR. Autophosphorylates and activates BasR by phosphorylation. Plays a role in the adaptation of the organism to the host environment, in particular to neutrophils, and therefore it plays a role in virulence as well. This Salmonella typhimurium (strain LT2 / SGSC1412 / ATCC 700720) protein is Sensor protein BasS (basS).